Reading from the N-terminus, the 205-residue chain is GTP cyclohydrolase-2 (205 aa).

Position 49–53 (49–53 (RLHSE)) interacts with GTP. Zn(2+)-binding residues include Cys54, Cys65, and Cys67. GTP-binding positions include Gln70, 92–94 (EGR), and Thr114. Asp126 (proton acceptor) is an active-site residue. The active-site Nucleophile is Arg128. Residues Thr149 and Lys154 each contribute to the GTP site.

Belongs to the GTP cyclohydrolase II family. It depends on Zn(2+) as a cofactor.

It catalyses the reaction GTP + 4 H2O = 2,5-diamino-6-hydroxy-4-(5-phosphoribosylamino)-pyrimidine + formate + 2 phosphate + 3 H(+). It participates in cofactor biosynthesis; riboflavin biosynthesis; 5-amino-6-(D-ribitylamino)uracil from GTP: step 1/4. Its function is as follows. Catalyzes the conversion of GTP to 2,5-diamino-6-ribosylamino-4(3H)-pyrimidinone 5'-phosphate (DARP), formate and pyrophosphate. The protein is GTP cyclohydrolase-2 of Pseudomonas putida (strain GB-1).